Consider the following 288-residue polypeptide: ATP synthase gamma chain (288 aa).

This sequence belongs to the ATPase gamma chain family. F-type ATPases have 2 components, CF(1) - the catalytic core - and CF(0) - the membrane proton channel. CF(1) has five subunits: alpha(3), beta(3), gamma(1), delta(1), epsilon(1). CF(0) has three main subunits: a, b and c.

It localises to the cell inner membrane. Functionally, produces ATP from ADP in the presence of a proton gradient across the membrane. The gamma chain is believed to be important in regulating ATPase activity and the flow of protons through the CF(0) complex. This chain is ATP synthase gamma chain, found in Rickettsia canadensis (strain McKiel).